A 632-amino-acid chain; its full sequence is MAU2 chromatid cohesion factor homolog (632 aa).

2 TPR repeats span residues 453–486 (GGFY…ANAE) and 493–526 (SCSL…ASKI).

Belongs to the SCC4/mau-2 family. As to quaternary structure, interacts with Nipped-B to form the cohesin loading complex.

The protein resides in the nucleus. It localises to the nucleoplasm. In terms of biological role, required for association of the cohesin complex with chromatin during interphase. Plays a role in sister chromatid cohesion and normal progression through prometaphase. The protein is MAU2 chromatid cohesion factor homolog of Drosophila simulans (Fruit fly).